The chain runs to 213 residues: MVERMKKDTGDETKTKVQEEPPSPSPPPPPPPRRERQKQHYWVPEREKKQIERHIHRTSHAREFTDKPWRQPRLFSETTLPKIVLEEESIPQAQKRRQAHERELLQIKDHRERMIRGRELLQQRLKDRILRKSPSQIPLPEKRDQVKKQKKEFEKVVAYPLVQPSCTSRIKVDVLMEKSQDEEDLSTIIKPFGRRFLAVPPFLRTQIGKIKDL.

The span at 1 to 19 (MVERMKKDTGDETKTKVQE) shows a compositional bias: basic and acidic residues. A disordered region spans residues 1 to 70 (MVERMKKDTG…AREFTDKPWR (70 aa)). Over residues 21–31 (PPSPSPPPPPP) the composition is skewed to pro residues. 2 stretches are compositionally biased toward basic and acidic residues: residues 43–53 (VPEREKKQIER) and 60–69 (HAREFTDKPW).

In terms of tissue distribution, expressed during spermatogenesis, initially at pachytene stage with abundance increasing in round spermatids and decreasing again during spermatid elongation.

Functionally, may be involved in male sterility. The sequence is that of RNA polymerase I subunit H from Mus musculus (Mouse).